A 675-amino-acid chain; its full sequence is MANSQRKILVTSALPYANGPIHLGHMLEYIQTDIWSRFQKLRGHECHYICADDAHGTPIMLKAQQLGMAPEEMIAQVNVEHQQDFADFNVAFDNYHSTHSDENRALASEIYLKLRDGGYIKSKTISQLFDPEKSMFLPDRFVKGTCPKCKSEDQYGDNCDACGATYSPTELINPRSAVSGATPVMKETEHFFFDLPAFEGMLKAWTRSGALQSEMANKLDEWFEQGLQQWDITRDAPYFGFEIPDAPGKYFYVWLDAPIGYMGSFKNFCDKRGDINFDEFWAKDSSAEVYHFIGKDIVYFHSLFWPAMLHGAGFRQPSSVYAHGYVTVNGAKMSKSKGTFIKARTYLDHLDPEYLRYYYAAKLSARIDDLDLNLEDFAQRVNSDLVGKLVNLASRTAGFITKRFDGKLAAVADKSLIDSFLAKQDVIAELYEAREYGKAMREIMALADVANGFVADAAPWQLVKQDDKQEEAHQVCSNALNLFRILVTYLKPVLPRLAKDVEDFFRMELTWDGLDSDLSGHEIAPFKPMMQRVELDKVAAMVEASKENLQATAEPVKTGPLADDPISETISYEDFAKIDLRVALIQKAEAVPEADKLLKLQLDIGGEVRQVFAGIKSAYNPEDLEGKLTVMVANLAPRKMRFGMSEGMVLAAGPGGKDLFVLEPHAGAKPGMRVK.

Residues 15 to 25 (PYANGPIHLGH) carry the 'HIGH' region motif. Zn(2+)-binding residues include Cys-146, Cys-149, Cys-159, and Cys-162. The short motif at 332–336 (KMSKS) is the 'KMSKS' region element. Lys-335 is an ATP binding site. The tRNA-binding domain occupies 574 to 675 (DFAKIDLRVA…AGAKPGMRVK (102 aa)).

The protein belongs to the class-I aminoacyl-tRNA synthetase family. MetG type 1 subfamily. In terms of assembly, homodimer. It depends on Zn(2+) as a cofactor.

It is found in the cytoplasm. The catalysed reaction is tRNA(Met) + L-methionine + ATP = L-methionyl-tRNA(Met) + AMP + diphosphate. Its function is as follows. Is required not only for elongation of protein synthesis but also for the initiation of all mRNA translation through initiator tRNA(fMet) aminoacylation. The sequence is that of Methionine--tRNA ligase from Shewanella amazonensis (strain ATCC BAA-1098 / SB2B).